Here is a 63-residue protein sequence, read N- to C-terminus: Adipokinetic prohormone type 1 (63 aa).

Positions 1-22 (MVQRCALVVLLVVAVAAALCSA) are cleaved as a signal peptide. Glutamine 23 carries the post-translational modification Pyrrolidone carboxylic acid. Residue threonine 32 is modified to Threonine amide.

It belongs to the AKH/HRTH/RPCH family.

It localises to the secreted. This hormone, released from cells in the corpora cardiaca, causes release of diglycerides from the fat body and stimulation of muscles to use these diglycerides as an energy source during energy-demanding processes. This is Adipokinetic prohormone type 1 from Locusta migratoria (Migratory locust).